A 124-amino-acid polypeptide reads, in one-letter code: MQRLMLKSKIHRARVTEANLHYEGSLTIDETLMKAADILPYEQIKVYNVFNGARFDTYAIAGPAGSGVFCLNGAAARMGAAGDLIIIATYAQYDEAEIARHQPKVVLLDGDNRPLSQGLKACLS.

The active-site Schiff-base intermediate with substrate; via pyruvic acid is S25. S25 carries the pyruvic acid (Ser) modification. A substrate-binding site is contributed by T57. The Proton donor role is filled by Y58. Substrate is bound at residue G73–A75.

This sequence belongs to the PanD family. Heterooctamer of four alpha and four beta subunits. Requires pyruvate as cofactor. In terms of processing, is synthesized initially as an inactive proenzyme, which is activated by self-cleavage at a specific serine bond to produce a beta-subunit with a hydroxyl group at its C-terminus and an alpha-subunit with a pyruvoyl group at its N-terminus.

Its subcellular location is the cytoplasm. The enzyme catalyses L-aspartate + H(+) = beta-alanine + CO2. The protein operates within cofactor biosynthesis; (R)-pantothenate biosynthesis; beta-alanine from L-aspartate: step 1/1. Its function is as follows. Catalyzes the pyruvoyl-dependent decarboxylation of aspartate to produce beta-alanine. The chain is Aspartate 1-decarboxylase from Syntrophobacter fumaroxidans (strain DSM 10017 / MPOB).